A 1466-amino-acid chain; its full sequence is ABC transporter G family member 40 (1466 aa).

The disordered stretch occupies residues 1-21 (MSHRHHAALVASASGRSPSWG). In terms of domain architecture, ABC transporter 1 spans 176 to 449 (GLIGQFGSSN…FEASGFRCPQ (274 aa)). Residue 209 to 216 (GPPSSGKS) participates in ATP binding. The region spanning 527-740 (ESLKAVLCRE…SQNAISINEF (214 aa)) is the ABC transmembrane type-2 1 domain. A run of 6 helical transmembrane segments spans residues 545 to 565 (FLYI…MTVF), 581 to 601 (FLGA…SELN), 633 to 653 (VPVS…VMGF), 664 to 684 (FLAF…LGAI), 690 to 710 (IAIS…GFVI), and 776 to 796 (FWLS…LYIL). Positions 821–831 (YTETRNEEHRS) are enriched in basic and acidic residues. The tract at residues 821–851 (YTETRNEEHRSRTSTTTSSIPTSANGEGNRP) is disordered. The span at 833–843 (TSTTTSSIPTS) shows a compositional bias: low complexity. Residues 865–1117 (LCFNHLNYYV…KLVEYFETIL (253 aa)) enclose the ABC transporter 2 domain. Position 910–917 (910–917 (GVSGAGKT)) interacts with ATP. In terms of domain architecture, ABC transmembrane type-2 2 spans 1190-1404 (IQCVANLWKQ…TIYGVIASQF (215 aa)). Helical transmembrane passes span 1209-1229 (YNSL…TVFW), 1241-1261 (LYNL…TNCM), 1297-1317 (FIYN…MIGY), 1327-1347 (FLFF…MLVA), 1355-1375 (ANIL…FLIF), 1396-1416 (IYGV…VPGG), and 1435-1455 (FLGY…LIFG).

The protein belongs to the ABC transporter superfamily. ABCG family. PDR (TC 3.A.1.205) subfamily.

It is found in the membrane. This is ABC transporter G family member 40 from Oryza sativa subsp. japonica (Rice).